Reading from the N-terminus, the 338-residue chain is MEDYAENSFNVIPISMEYIRDLRTATSFRVYVIYIDLVLILALFLSIHAIRELTSKQLFSKSITHLLIASLVYGNVHNASYTIIETWSLYRSFAYSDNMTAIMFTSEECFVQHVLNSCVRFLFIAIELALNVDRIIVILFRKHFHCYPGVRGEILNILAVILSFALGCLLHLKGPHPGIVTTSCFRETDITINLCSTNLTSYTILSACCAALDFLMMWYTWNDRKKINYDLNSQYLKVEQHHSLMAVSLNSLLQLFVTSIYAISMFVLANMSMTNPELGNANLLRWFYTTPYSTLLVPIQIKVFIQWIGNRRKRRINTATRVSLTQDGYFTKLSDSWK.

7 consecutive transmembrane segments (helical) span residues 30–50 (VYVI…IHAI), 63–83 (ITHL…SYTI), 120–140 (RFLF…VILF), 152–172 (GEIL…LLHL), 199–219 (LTSY…MMWY), 249–269 (LNSL…FVLA), and 289–309 (TTPY…QWIG).

Belongs to the nematode receptor-like protein sra family.

It localises to the membrane. The chain is Serpentine receptor class alpha-32 (sra-32) from Caenorhabditis elegans.